Consider the following 444-residue polypeptide: MVMLISLSLKKVIWMNVDPNLTKYMIKAKIYTDGVVEKPDVVGAIFGQTEGLLGDDLDLRDLQKSGKIGRIEVEIDSKKGRTEGYALIPSGLDQVETAILAAALETIDRIGPCKAKVEIANVEDVRVQKRQKIIERAKKIYQDMNSKGDDLSESLVKSVREEVEKSEIISYGEEKLPAGPAINDSDSIIVVEGRNDVLNLLKYGIKNTIAVQGTNIPETVKKLSKERTVTVFLDGDRGGDLILKEMLQVAEVDFVARAPPGTEVEELTYKQIVKALRYKTPIDQYLSMHGMNDELKEYSQRNNLVFTNHNSEQKKEVLEEPEAEKNEVLEQGEVTQQVSVPKEGYLDLLNPHDVSRRIEALSQLKTTEIYDSNGQRIASFPVAEAVDRIIQDPQGNTIVTGGIISQRLIDVAYNAGIKNIYGLKLGHITKKPVDINVIAWDRST.

One can recognise a Toprim domain in the interval 186–260 (DSIIVVEGRN…EVDFVARAPP (75 aa)). Positions 192, 234, and 236 each coordinate Mg(2+).

Belongs to the archaeal DnaG primase family. In terms of assembly, forms a ternary complex with MCM helicase and DNA. Component of the archaeal exosome complex. It depends on Mg(2+) as a cofactor.

The catalysed reaction is ssDNA + n NTP = ssDNA/pppN(pN)n-1 hybrid + (n-1) diphosphate.. Its function is as follows. RNA polymerase that catalyzes the synthesis of short RNA molecules used as primers for DNA polymerase during DNA replication. Also part of the exosome, which is a complex involved in RNA degradation. Acts as a poly(A)-binding protein that enhances the interaction between heteromeric, adenine-rich transcripts and the exosome. The protein is DNA primase DnaG of Thermoplasma volcanium (strain ATCC 51530 / DSM 4299 / JCM 9571 / NBRC 15438 / GSS1).